The chain runs to 373 residues: Dual-specificity RNA methyltransferase RlmN (373 aa).

Glutamate 94 (proton acceptor) is an active-site residue. Residues 100-339 (EDDRATLCVS…VIVRKTRGDD (240 aa)) form the Radical SAM core domain. Cysteine 107 and cysteine 344 are oxidised to a cystine. [4Fe-4S] cluster is bound by residues cysteine 114, cysteine 118, and cysteine 121. S-adenosyl-L-methionine-binding positions include 168 to 169 (GE), serine 200, 222 to 224 (SIH), and asparagine 301. Catalysis depends on cysteine 344, which acts as the S-methylcysteine intermediate.

This sequence belongs to the radical SAM superfamily. RlmN family. [4Fe-4S] cluster serves as cofactor.

It is found in the cytoplasm. The enzyme catalyses adenosine(2503) in 23S rRNA + 2 reduced [2Fe-2S]-[ferredoxin] + 2 S-adenosyl-L-methionine = 2-methyladenosine(2503) in 23S rRNA + 5'-deoxyadenosine + L-methionine + 2 oxidized [2Fe-2S]-[ferredoxin] + S-adenosyl-L-homocysteine. It carries out the reaction adenosine(37) in tRNA + 2 reduced [2Fe-2S]-[ferredoxin] + 2 S-adenosyl-L-methionine = 2-methyladenosine(37) in tRNA + 5'-deoxyadenosine + L-methionine + 2 oxidized [2Fe-2S]-[ferredoxin] + S-adenosyl-L-homocysteine. In terms of biological role, specifically methylates position 2 of adenine 2503 in 23S rRNA and position 2 of adenine 37 in tRNAs. m2A2503 modification seems to play a crucial role in the proofreading step occurring at the peptidyl transferase center and thus would serve to optimize ribosomal fidelity. This Shewanella amazonensis (strain ATCC BAA-1098 / SB2B) protein is Dual-specificity RNA methyltransferase RlmN.